A 441-amino-acid chain; its full sequence is 4-hydroxy-3-methylbut-2-en-1-yl diphosphate synthase (flavodoxin) (441 aa).

Residues Cys-320, Cys-323, Cys-366, and Glu-373 each coordinate [4Fe-4S] cluster.

It belongs to the IspG family. Requires [4Fe-4S] cluster as cofactor.

The enzyme catalyses (2E)-4-hydroxy-3-methylbut-2-enyl diphosphate + oxidized [flavodoxin] + H2O + 2 H(+) = 2-C-methyl-D-erythritol 2,4-cyclic diphosphate + reduced [flavodoxin]. It functions in the pathway isoprenoid biosynthesis; isopentenyl diphosphate biosynthesis via DXP pathway; isopentenyl diphosphate from 1-deoxy-D-xylulose 5-phosphate: step 5/6. Functionally, converts 2C-methyl-D-erythritol 2,4-cyclodiphosphate (ME-2,4cPP) into 1-hydroxy-2-methyl-2-(E)-butenyl 4-diphosphate. This Rhodopseudomonas palustris (strain ATCC BAA-98 / CGA009) protein is 4-hydroxy-3-methylbut-2-en-1-yl diphosphate synthase (flavodoxin).